We begin with the raw amino-acid sequence, 120 residues long: UPF0231 protein Spro_4007 (120 aa).

It belongs to the UPF0231 family.

The sequence is that of UPF0231 protein Spro_4007 from Serratia proteamaculans (strain 568).